A 263-amino-acid polypeptide reads, in one-letter code: Putative alpha/beta hydrolase L404 (263 aa).

A lipid anchor (N-myristoyl glycine; by host) is attached at glycine 2.

This sequence belongs to the AB hydrolase superfamily.

This Acanthamoeba polyphaga (Amoeba) protein is Putative alpha/beta hydrolase L404.